Here is a 237-residue protein sequence, read N- to C-terminus: tRNA-splicing endonuclease subunit Sen2-1 (237 aa).

Residues Tyr-148, His-156, and Lys-190 contribute to the active site.

Belongs to the tRNA-intron endonuclease family. As to quaternary structure, tRNA splicing endonuclease is a heterotetramer composed of SEN2, SEN15, SEN34/LENG5 and SEN54.

It localises to the nucleus. It carries out the reaction pretRNA = a 3'-half-tRNA molecule with a 5'-OH end + a 5'-half-tRNA molecule with a 2',3'-cyclic phosphate end + an intron with a 2',3'-cyclic phosphate and a 5'-hydroxyl terminus.. Constitutes one of the two catalytic subunit of the tRNA-splicing endonuclease complex, a complex responsible for identification and cleavage of the splice sites in pre-tRNA. It cleaves pre-tRNA at the 5'- and 3'-splice sites to release the intron. The products are an intron and two tRNA half-molecules bearing 2',3'-cyclic phosphate and 5'-OH termini. There are no conserved sequences at the splice sites, but the intron is invariably located at the same site in the gene, placing the splice sites an invariant distance from the constant structural features of the tRNA body. Probably carries the active site for 5'-splice site cleavage. In Arabidopsis thaliana (Mouse-ear cress), this protein is tRNA-splicing endonuclease subunit Sen2-1 (SEN1).